Consider the following 521-residue polypeptide: Cyclic AMP-responsive element-binding protein 3-like protein 2 (521 aa).

Topologically, residues 1–378 are cytoplasmic; it reads MEVLESGEQS…CKLAGTQTGT (378 aa). The residue at position 93 (Ser93) is a Phosphoserine. A Glycyl lysine isopeptide (Lys-Gly) (interchain with G-Cter in SUMO2) cross-link involves residue Lys178. Ser191 carries the post-translational modification Phosphoserine. Positions 196-264 are disordered; sequence SVDQLHLPPT…PHKLQGSGPL (69 aa). Over residues 208-220 the composition is skewed to low complexity; that stretch reads SSHSSDSEGSLSP. The bZIP domain maps to 294-357; it reads ALKKIRRKIK…RTLLQQLQKL (64 aa). The basic motif stretch occupies residues 296–325; that stretch reads KKIRRKIKNKISAQESRRKKKEYMDSLEKK. Positions 336-357 are leucine-zipper; that stretch reads LRKKVEVLENTNRTLLQQLQKL. Residues 379-399 traverse the membrane as a helical; Signal-anchor for type II membrane protein segment; the sequence is CLMVVVLCFAVAFGSLFQGYG. Residues 400–521 lie on the Lumenal side of the membrane; sequence LYPSATKMAL…ELERRVNATF (122 aa). Positions 427 to 430 match the S1P recognition motif; the sequence is RNLL. Asn505 and Asn518 each carry an N-linked (GlcNAc...) asparagine glycan.

It belongs to the bZIP family. ATF subfamily. Binds DNA as a dimer. Upon ER stress, translocated to the Golgi apparatus, where it is processed by regulated intramembrane proteolysis (RIP) to release the cytosol-facing N-terminal transcription factor domain. The cleavage is performed sequentially by site-1 and site-2 proteases (S1P/MBTPS1 and S2P/MBTPS2). In terms of processing, N-glycosylated. Post-translationally, ubiquitinated by HRD1/SYVN1; undergoes 'Lys-48'-linked ubiquitination, followed by rapid proteasomal degradation under normal conditions. Upon ER stress, SYVN1 E3 ubiquitin-protein ligase dissociates from its substrate, ubiquitination does not occur and CREB3L2 is stabilized.

It localises to the endoplasmic reticulum membrane. The protein localises to the nucleus. Functionally, transcription factor involved in unfolded protein response (UPR). In the absence of endoplasmic reticulum (ER) stress, inserted into ER membranes, with N-terminal DNA-binding and transcription activation domains oriented toward the cytosolic face of the membrane. In response to ER stress, transported to the Golgi, where it is cleaved in a site-specific manner by resident proteases S1P/MBTPS1 and S2P/MBTPS2. The released N-terminal cytosolic domain is translocated to the nucleus to effect transcription of specific target genes. Plays a critical role in chondrogenesis by activating the transcription of SEC23A, which promotes the transport and secretion of cartilage matrix proteins, and possibly that of ER biogenesis-related genes. In a neuroblastoma cell line, protects cells from ER stress-induced death. In vitro activates transcription of target genes via direct binding to the CRE site. In Rattus norvegicus (Rat), this protein is Cyclic AMP-responsive element-binding protein 3-like protein 2 (Creb3l2).